A 149-amino-acid polypeptide reads, in one-letter code: D-aminoacyl-tRNA deacylase (149 aa).

A Gly-cisPro motif, important for rejection of L-amino acids motif is present at residues 137–138 (GP).

It belongs to the DTD family. In terms of assembly, homodimer.

It localises to the cytoplasm. The catalysed reaction is glycyl-tRNA(Ala) + H2O = tRNA(Ala) + glycine + H(+). The enzyme catalyses a D-aminoacyl-tRNA + H2O = a tRNA + a D-alpha-amino acid + H(+). In terms of biological role, an aminoacyl-tRNA editing enzyme that deacylates mischarged D-aminoacyl-tRNAs. Also deacylates mischarged glycyl-tRNA(Ala), protecting cells against glycine mischarging by AlaRS. Acts via tRNA-based rather than protein-based catalysis; rejects L-amino acids rather than detecting D-amino acids in the active site. By recycling D-aminoacyl-tRNA to D-amino acids and free tRNA molecules, this enzyme counteracts the toxicity associated with the formation of D-aminoacyl-tRNA entities in vivo and helps enforce protein L-homochirality. The sequence is that of D-aminoacyl-tRNA deacylase from Syntrophobacter fumaroxidans (strain DSM 10017 / MPOB).